The chain runs to 629 residues: tRNA uridine 5-carboxymethylaminomethyl modification enzyme MnmG (629 aa).

FAD contacts are provided by residues 13–18, V125, and S180; that span reads GGGHAG. 273–287 is a binding site for NAD(+); the sequence is GPRYCPSIEDKVMRF. Q370 serves as a coordination point for FAD.

It belongs to the MnmG family. Homodimer. Heterotetramer of two MnmE and two MnmG subunits. It depends on FAD as a cofactor.

It localises to the cytoplasm. Its function is as follows. NAD-binding protein involved in the addition of a carboxymethylaminomethyl (cmnm) group at the wobble position (U34) of certain tRNAs, forming tRNA-cmnm(5)s(2)U34. The chain is tRNA uridine 5-carboxymethylaminomethyl modification enzyme MnmG from Psychromonas ingrahamii (strain DSM 17664 / CCUG 51855 / 37).